Reading from the N-terminus, the 433-residue chain is Serine hydroxymethyltransferase (433 aa).

Position 121-123 (121-123 (AHV)) interacts with (6S)-5,6,7,8-tetrahydrofolate. N6-(pyridoxal phosphate)lysine is present on Lys-227. Residue Glu-243 coordinates (6S)-5,6,7,8-tetrahydrofolate.

It belongs to the SHMT family. In terms of assembly, homodimer. Requires pyridoxal 5'-phosphate as cofactor.

The protein localises to the cytoplasm. The enzyme catalyses 5,10-methylenetetrahydrosulfopterin + glycine + H2O = tetrahydrosulfopterin + L-serine. It functions in the pathway amino-acid biosynthesis; glycine biosynthesis; glycine from L-serine: step 1/1. Is completely inhibited by addition of NaCNBH(3) in vitro; this reagent is a known inhibitor of PLP enzymes, that reduces the internal aldimine of PLP to the catalytically inactive and stable secondary amine. Is also inhibited by L-cysteine, which forms a thiazolidine complex with the active site PLP. In terms of biological role, catalyzes the reversible interconversion of serine and glycine with the modified folate sulfopterin serving as the one-carbon carrier. Cannot use tetrahydrofolate (THF or H4PteGlu) as the pteridine substrate. Also exhibits a pteridine-independent aldolase activity toward beta-hydroxyamino acids, producing glycine and aldehydes, via a retro-aldol mechanism. Thus, is able to catalyze the cleavage of both allo-threonine and beta-phenylserine. The chain is Serine hydroxymethyltransferase from Saccharolobus solfataricus (strain ATCC 35092 / DSM 1617 / JCM 11322 / P2) (Sulfolobus solfataricus).